Reading from the N-terminus, the 178-residue chain is MDMTPASADGLIVLGKITSVHGVRGEVKVYSFTDPIDNLLDYRFWTLRRGDERRQIELVRGRPQGRLLVARLKGIEDRDGARALADFEVCVPIAQLPRLDEGEFYWHQLEGLRVVDREGRLFGKVDHLLETGANDVLVVRPCTGSLDDRERLLPYTDQCVLRVDLAAGEIRVDWDADF.

The PRC barrel domain occupies 100 to 178 (DEGEFYWHQL…EIRVDWDADF (79 aa)).

The protein belongs to the RimM family. As to quaternary structure, binds ribosomal protein uS19.

It localises to the cytoplasm. Functionally, an accessory protein needed during the final step in the assembly of 30S ribosomal subunit, possibly for assembly of the head region. Essential for efficient processing of 16S rRNA. May be needed both before and after RbfA during the maturation of 16S rRNA. It has affinity for free ribosomal 30S subunits but not for 70S ribosomes. This Azotobacter vinelandii (strain DJ / ATCC BAA-1303) protein is Ribosome maturation factor RimM.